A 661-amino-acid chain; its full sequence is Transketolase (661 aa).

Position 28 (H28) interacts with substrate. Thiamine diphosphate contacts are provided by residues H68 and 116–118; that span reads GPL. E157 contributes to the Mg(2+) binding site. Thiamine diphosphate is bound by residues G158 and N187. Residues N187 and I189 each contribute to the Mg(2+) site. Substrate is bound by residues H261 and R358. H261 is a binding site for thiamine diphosphate. E412 serves as the catalytic Proton donor. F438 contacts thiamine diphosphate. Substrate contacts are provided by H462, D470, and R521.

It belongs to the transketolase family. In terms of assembly, homodimer. Mg(2+) is required as a cofactor. The cofactor is Ca(2+). It depends on Mn(2+) as a cofactor. Requires Co(2+) as cofactor. Thiamine diphosphate serves as cofactor.

The catalysed reaction is D-sedoheptulose 7-phosphate + D-glyceraldehyde 3-phosphate = aldehydo-D-ribose 5-phosphate + D-xylulose 5-phosphate. Functionally, catalyzes the transfer of a two-carbon ketol group from a ketose donor to an aldose acceptor, via a covalent intermediate with the cofactor thiamine pyrophosphate. The chain is Transketolase (tkt) from Treponema pallidum (strain Nichols).